Here is a 226-residue protein sequence, read N- to C-terminus: Glutathione S-transferase kappa 1 (226 aa).

Glutathione contacts are provided by residues 15–17, Asn-53, and 199–200; these read SPY and SD.

Belongs to the GST superfamily. Kappa family.

The catalysed reaction is RX + glutathione = an S-substituted glutathione + a halide anion + H(+). The protein is Glutathione S-transferase kappa 1 (gstk-1) of Caenorhabditis elegans.